Reading from the N-terminus, the 30-residue chain is Brevinin-2Ej (30 aa).

Cys-24 and Cys-30 form a disulfide bridge.

In terms of tissue distribution, expressed by the skin glands.

It is found in the secreted. Its function is as follows. Shows antibacterial activity against representative Gram-negative and Gram-positive bacterial species, and hemolytic activity. The chain is Brevinin-2Ej from Pelophylax ridibundus (Marsh frog).